The primary structure comprises 125 residues: Holo-[acyl-carrier-protein] synthase (125 aa).

Mg(2+) contacts are provided by aspartate 8 and glutamate 57.

Belongs to the P-Pant transferase superfamily. AcpS family. Mg(2+) serves as cofactor.

The protein localises to the cytoplasm. The catalysed reaction is apo-[ACP] + CoA = holo-[ACP] + adenosine 3',5'-bisphosphate + H(+). Its function is as follows. Transfers the 4'-phosphopantetheine moiety from coenzyme A to a Ser of acyl-carrier-protein. This chain is Holo-[acyl-carrier-protein] synthase, found in Koribacter versatilis (strain Ellin345).